The sequence spans 144 residues: TSC22 domain family protein 1 (144 aa).

The interval 77–98 (LKEQIKELIEKNSQLEQENNLL) is leucine-zipper. The disordered stretch occupies residues 109-144 (QFQAQLQTGSPPATTQPQGTTQPPAQPASQGSGPTA). Positions 115–144 (QTGSPPATTQPQGTTQPPAQPASQGSGPTA) are enriched in low complexity.

The protein belongs to the TSC-22/Dip/Bun family. In terms of assembly, forms homodimers. Forms a heterodimer with TSC22D4/THG1. Interacts with histone H1-2. Interacts with GNL3.

The protein localises to the cytoplasm. It is found in the nucleus. Transcriptional repressor. Plays a role in the repression of hematopoietic precursor cell growth. Promotes IL2 deprivation-induced apoptosis in T-lymphocytes, via repression of TSC22D3/GILZ transcription and activation of the caspase cascade. Positively regulates cell death in response to TGFB3 during mammary gland involution. The protein is TSC22 domain family protein 1 of Bos taurus (Bovine).